A 77-amino-acid chain; its full sequence is U8-lycotoxin-Ls1e (77 aa).

An N-terminal signal peptide occupies residues 1–20 (MKLIIFTGLVLFAIVSLIEA). The propeptide occupies 21-26 (QAENEK).

It belongs to the neurotoxin 19 (CSTX) family. 08 (U8-Lctx) subfamily. Post-translationally, contains 4 disulfide bonds. In terms of tissue distribution, expressed by the venom gland.

The protein localises to the secreted. This is U8-lycotoxin-Ls1e from Lycosa singoriensis (Wolf spider).